The sequence spans 692 residues: Protein artemis (692 aa).

Thr380 is modified (phosphothreonine). The residue at position 385 (Ser385) is a Phosphoserine. Disordered stretches follow at residues 503-555 (RLEN…DSQS) and 640-660 (STNA…PEAE). The segment covering 507-520 (FPSSTEAGGSQSPK) has biased composition (polar residues). Residues 530-543 (THISSQNSSQSTHI) are compositionally biased toward low complexity. Polar residues-rich tracts occupy residues 544–555 (TEQGSQGWDSQS) and 640–650 (STNADSQSSSD). At Ser645 the chain carries Phosphoserine; by ATM.

This sequence belongs to the DNA repair metallo-beta-lactamase (DRMBL) family. As to quaternary structure, interacts with LIG4; the interaction is direct. Interacts with ATM. Interacts with BRCA1. Interacts with PRKDC. Interacts with TP53BP1. Also exhibits ATM- and phosphorylation-dependent interaction with the MRN complex, composed of MRE11, RAD50, and NBN. Post-translationally, phosphorylation on undefined residues by PRKDC may stimulate endonucleolytic activity on 5' and 3' hairpins and overhangs. PRKDC must remain present, even after phosphorylation, for efficient hairpin opening. Also phosphorylated by ATM in response to ionizing radiation (IR) and by ATR in response to ultraviolet (UV) radiation.

It is found in the nucleus. Required for V(D)J recombination, the process by which exons encoding the antigen-binding domains of immunoglobulins and T-cell receptor proteins are assembled from individual V, (D), and J gene segments. V(D)J recombination is initiated by the lymphoid specific RAG endonuclease complex, which generates site specific DNA double strand breaks (DSBs). These DSBs present two types of DNA end structures: hairpin sealed coding ends and phosphorylated blunt signal ends. These ends are independently repaired by the non homologous end joining (NHEJ) pathway to form coding and signal joints respectively. This protein exhibits single-strand specific 5'-3' exonuclease activity in isolation, and acquires endonucleolytic activity on 5' and 3' hairpins and overhangs when in a complex with PRKDC. The latter activity is required specifically for the resolution of closed hairpins prior to the formation of the coding joint. May also be required for the repair of complex DSBs induced by ionizing radiation, which require substantial end-processing prior to religation by NHEJ. The sequence is that of Protein artemis (DCLRE1C) from Pongo abelii (Sumatran orangutan).